Here is a 139-residue protein sequence, read N- to C-terminus: Aspartate 1-decarboxylase (139 aa).

The active-site Schiff-base intermediate with substrate; via pyruvic acid is the serine 25. Serine 25 is modified (pyruvic acid (Ser)). Residue threonine 57 participates in substrate binding. Tyrosine 58 serves as the catalytic Proton donor. Residue 73 to 75 (GAA) coordinates substrate. Residues 116 to 139 (ELGEDPAHAPAGSGLKDPRHPEGE) form a disordered region.

Belongs to the PanD family. In terms of assembly, heterooctamer of four alpha and four beta subunits. Requires pyruvate as cofactor. Post-translationally, is synthesized initially as an inactive proenzyme, which is activated by self-cleavage at a specific serine bond to produce a beta-subunit with a hydroxyl group at its C-terminus and an alpha-subunit with a pyruvoyl group at its N-terminus.

The protein localises to the cytoplasm. The catalysed reaction is L-aspartate + H(+) = beta-alanine + CO2. Its pathway is cofactor biosynthesis; (R)-pantothenate biosynthesis; beta-alanine from L-aspartate: step 1/1. Catalyzes the pyruvoyl-dependent decarboxylation of aspartate to produce beta-alanine. The polypeptide is Aspartate 1-decarboxylase (Corynebacterium urealyticum (strain ATCC 43042 / DSM 7109)).